We begin with the raw amino-acid sequence, 259 residues long: Imidazole glycerol phosphate synthase subunit HisF (259 aa).

Catalysis depends on residues Asp11 and Asp130.

The protein belongs to the HisA/HisF family. Heterodimer of HisH and HisF.

The protein resides in the cytoplasm. It carries out the reaction 5-[(5-phospho-1-deoxy-D-ribulos-1-ylimino)methylamino]-1-(5-phospho-beta-D-ribosyl)imidazole-4-carboxamide + L-glutamine = D-erythro-1-(imidazol-4-yl)glycerol 3-phosphate + 5-amino-1-(5-phospho-beta-D-ribosyl)imidazole-4-carboxamide + L-glutamate + H(+). Its pathway is amino-acid biosynthesis; L-histidine biosynthesis; L-histidine from 5-phospho-alpha-D-ribose 1-diphosphate: step 5/9. Its function is as follows. IGPS catalyzes the conversion of PRFAR and glutamine to IGP, AICAR and glutamate. The HisF subunit catalyzes the cyclization activity that produces IGP and AICAR from PRFAR using the ammonia provided by the HisH subunit. In Oleidesulfovibrio alaskensis (strain ATCC BAA-1058 / DSM 17464 / G20) (Desulfovibrio alaskensis), this protein is Imidazole glycerol phosphate synthase subunit HisF.